A 202-amino-acid chain; its full sequence is LexA repressor (202 aa).

Positions 28–48 form a DNA-binding region, H-T-H motif; sequence RAEIAAQLGFRSPNAAEEHLK. Catalysis depends on for autocatalytic cleavage activity residues Ser119 and Lys156.

The protein belongs to the peptidase S24 family. In terms of assembly, homodimer.

The catalysed reaction is Hydrolysis of Ala-|-Gly bond in repressor LexA.. In terms of biological role, represses a number of genes involved in the response to DNA damage (SOS response), including recA and lexA. Binds to the 16 bp palindromic sequence 5'-CTGTATATATATACAG-3'. In the presence of single-stranded DNA, RecA interacts with LexA causing an autocatalytic cleavage which disrupts the DNA-binding part of LexA, leading to derepression of the SOS regulon and eventually DNA repair. The sequence is that of LexA repressor from Erwinia tasmaniensis (strain DSM 17950 / CFBP 7177 / CIP 109463 / NCPPB 4357 / Et1/99).